The primary structure comprises 527 residues: Probable protein kinase UbiB (527 aa).

Positions 118–501 constitute a Protein kinase domain; sequence DFERVPVASA…QKRTNRLLQG (384 aa). ATP-binding positions include 124 to 132 and K150; that span reads VASASIAQV. The active-site Proton acceptor is D285. The helical transmembrane segment at 502-522 threads the bilayer; the sequence is LLMFGVAVGVGAVLARAWLAI.

Belongs to the ABC1 family. UbiB subfamily.

It localises to the cell inner membrane. The protein operates within cofactor biosynthesis; ubiquinone biosynthesis [regulation]. Functionally, is probably a protein kinase regulator of UbiI activity which is involved in aerobic coenzyme Q (ubiquinone) biosynthesis. The protein is Probable protein kinase UbiB of Paraburkholderia phymatum (strain DSM 17167 / CIP 108236 / LMG 21445 / STM815) (Burkholderia phymatum).